The following is a 65-amino-acid chain: UPF0337 protein gbs1203 (65 aa).

Basic and acidic residues predominate over residues 1–12; that stretch reads MSEEKFDAKVDK. Residues 1–29 are disordered; the sequence is MSEEKFDAKVDKVSGSVKESVGKLTGDKE.

Belongs to the UPF0337 (CsbD) family.

This is UPF0337 protein gbs1203 from Streptococcus agalactiae serotype III (strain NEM316).